The primary structure comprises 496 residues: MNIPFVVETVLHDGLLKYKFKNSKIRSITTKPGKSKGAIFAYRSKKSMIGGRGVVLTSEEAIHENQDTFTHWTPNVYRYGTYADENRSYTKGHSENNLRQINTFFIDFDIHTEKETISASDILTTAIDLGFMPTLIIKSDKGYQAYFVLETPVYVTSKSEFKSVKAAKIISQNIREYFGKSLPVDLTCNHFGIARIPRTDNVEFFDPNYRYSFKEWQDWSFKQTDNKGFTRSSLMVLSGTEGKKQVDEPWFNLLLHETKFSGEKGLVGRNSVMFTLSLAYFSSGYSIETCEYNMFEFNNRLDQPLEEKEVIKLVRSAYSENYQGANREYITILCKAWVSSDLTSKDLFVRQGWFKFKKKRSERQRVHLSEWKEDLMAYISEKSDVYKPYLVTTKKEIREALGIPERTLDKLLKVLKANQEIFFKIKSGRNGGIQLASGKSLLLSIIKVKKEEKESYIKALTNSFDLEHTFIQETLNKLAERPKTDTQLDLFSYDTG.

A DNA-binding region spans residues 120-141 (SDILTTAIDLGFMPTLIIKSDK).

In terms of biological role, essential for replication. This chain is Protein RepS (repS), found in Streptococcus pyogenes.